Consider the following 167-residue polypeptide: Crossover junction endodeoxyribonuclease RuvC (167 aa).

Catalysis depends on residues Asp-7, Glu-67, and Asp-139. Residues Asp-7, Glu-67, and Asp-139 each coordinate Mg(2+).

Belongs to the RuvC family. As to quaternary structure, homodimer which binds Holliday junction (HJ) DNA. The HJ becomes 2-fold symmetrical on binding to RuvC with unstacked arms; it has a different conformation from HJ DNA in complex with RuvA. In the full resolvosome a probable DNA-RuvA(4)-RuvB(12)-RuvC(2) complex forms which resolves the HJ. It depends on Mg(2+) as a cofactor.

It localises to the cytoplasm. It catalyses the reaction Endonucleolytic cleavage at a junction such as a reciprocal single-stranded crossover between two homologous DNA duplexes (Holliday junction).. In terms of biological role, the RuvA-RuvB-RuvC complex processes Holliday junction (HJ) DNA during genetic recombination and DNA repair. Endonuclease that resolves HJ intermediates. Cleaves cruciform DNA by making single-stranded nicks across the HJ at symmetrical positions within the homologous arms, yielding a 5'-phosphate and a 3'-hydroxyl group; requires a central core of homology in the junction. The consensus cleavage sequence is 5'-(A/T)TT(C/G)-3'. Cleavage occurs on the 3'-side of the TT dinucleotide at the point of strand exchange. HJ branch migration catalyzed by RuvA-RuvB allows RuvC to scan DNA until it finds its consensus sequence, where it cleaves and resolves the cruciform DNA. The sequence is that of Crossover junction endodeoxyribonuclease RuvC from Akkermansia muciniphila (strain ATCC BAA-835 / DSM 22959 / JCM 33894 / BCRC 81048 / CCUG 64013 / CIP 107961 / Muc).